We begin with the raw amino-acid sequence, 556 residues long: 2-succinyl-5-enolpyruvyl-6-hydroxy-3-cyclohexene-1-carboxylate synthase (556 aa).

Belongs to the TPP enzyme family. MenD subfamily. As to quaternary structure, homodimer. Requires Mg(2+) as cofactor. It depends on Mn(2+) as a cofactor. The cofactor is thiamine diphosphate.

It carries out the reaction isochorismate + 2-oxoglutarate + H(+) = 5-enolpyruvoyl-6-hydroxy-2-succinyl-cyclohex-3-ene-1-carboxylate + CO2. The protein operates within quinol/quinone metabolism; 1,4-dihydroxy-2-naphthoate biosynthesis; 1,4-dihydroxy-2-naphthoate from chorismate: step 2/7. It functions in the pathway quinol/quinone metabolism; menaquinone biosynthesis. Functionally, catalyzes the thiamine diphosphate-dependent decarboxylation of 2-oxoglutarate and the subsequent addition of the resulting succinic semialdehyde-thiamine pyrophosphate anion to isochorismate to yield 2-succinyl-5-enolpyruvyl-6-hydroxy-3-cyclohexene-1-carboxylate (SEPHCHC). This is 2-succinyl-5-enolpyruvyl-6-hydroxy-3-cyclohexene-1-carboxylate synthase from Salmonella paratyphi C (strain RKS4594).